The sequence spans 285 residues: Urease accessory protein UreD (285 aa).

The protein belongs to the UreD family. As to quaternary structure, ureD, UreF and UreG form a complex that acts as a GTP-hydrolysis-dependent molecular chaperone, activating the urease apoprotein by helping to assemble the nickel containing metallocenter of UreC. The UreE protein probably delivers the nickel.

Its subcellular location is the cytoplasm. Required for maturation of urease via the functional incorporation of the urease nickel metallocenter. This Methylobacillus flagellatus (strain ATCC 51484 / DSM 6875 / VKM B-1610 / KT) protein is Urease accessory protein UreD.